Reading from the N-terminus, the 391-residue chain is Cold-shock protein CS120 (391 aa).

17 tandem repeats follow at residues 9 to 31 (GEKKGIMEKIKEKLPGGHGDHKE), 49 to 62 (TGGAYGQQGHAGTT), 72 to 94 (GEKKGVMENIKDKLPGGHQDHQQ), 95 to 108 (TGGTYGQQGHTGTA), 115 to 128 (TGGTYGQQGHTGTA), 135 to 148 (TGGTYGEQGHTGVT), 156 to 178 (GEKKGVMENIKEKLPGGHGDHQQ), 179 to 192 (TGGTYGQQGHTGTA), 199 to 212 (GGGTYEQHGHTGMT), 220 to 242 (GEKKGVMENIKDKLPGGHGDHQQ), 243 to 256 (TGGTYGQQGHTGTA), 263 to 276 (GGGTYEQHGHTGMT), 284 to 306 (GEKKGVMENIKEKLPGGHSDHQQ), 307 to 320 (TGGAYGQQGHTGTA), 327 to 340 (GGGTYGQHGHAGVI), 350 to 363 (TGGTHGQHGHTGTT), and 374 to 391 (GEKKSLMDKIKDKLPGQH). The tract at residues 9-391 (GEKKGIMEKI…KIKDKLPGQH (383 aa)) is 6 X 23 AA approximate repeats. Basic and acidic residues predominate over residues 21-33 (KLPGGHGDHKETA). The tract at residues 21–391 (KLPGGHGDHK…KIKDKLPGQH (371 aa)) is disordered. Low complexity predominate over residues 34–59 (GTHGHPGTATHGAPATGGAYGQQGHA). Positions 49–363 (TGGAYGQQGH…HGQHGHTGTT (315 aa)) are 11 X 14 AA approximate repeats. Residues 70–92 (HAGEKKGVMENIKDKLPGGHQDH) are compositionally biased toward basic and acidic residues. The segment covering 93-145 (QQTGGTYGQQGHTGTATHGTPATGGTYGQQGHTGTATHGTPATGGTYGEQGHT) has biased composition (low complexity). A compositionally biased stretch (basic and acidic residues) spans 155–176 (TGEKKGVMENIKEKLPGGHGDH). The span at 177-196 (QQTGGTYGQQGHTGTATHGT) shows a compositional bias: low complexity. Over residues 219 to 240 (TGEKKGVMENIKDKLPGGHGDH) the composition is skewed to basic and acidic residues. 2 stretches are compositionally biased toward low complexity: residues 241–260 (QQTGGTYGQQGHTGTATQGT) and 272–282 (HTGMTGAGTHS). Residues 283-304 (TGEKKGVMENIKEKLPGGHSDH) show a composition bias toward basic and acidic residues. 2 stretches are compositionally biased toward low complexity: residues 305 to 324 (QQTGGAYGQQGHTGTATHGT) and 333 to 351 (QHGHAGVIGTETHGTTATG). The span at 361-372 (GTTGTGTHGSDG) shows a compositional bias: gly residues. Over residues 373 to 391 (IGEKKSLMDKIKDKLPGQH) the composition is skewed to basic and acidic residues.

It belongs to the plant dehydrin family.

Its function is as follows. May reduce intracellular freezing damage during winter by hydrogen-bonding to the lattice of the nascent ice crystals, thus modifying the structure and/or propagation of ice crystals. This is Cold-shock protein CS120 (CS120) from Triticum aestivum (Wheat).